Here is a 344-residue protein sequence, read N- to C-terminus: Inositol 2-dehydrogenase/D-chiro-inositol 3-dehydrogenase (344 aa).

This sequence belongs to the Gfo/Idh/MocA family. As to quaternary structure, homotetramer.

The catalysed reaction is myo-inositol + NAD(+) = scyllo-inosose + NADH + H(+). It carries out the reaction 1D-chiro-inositol + NAD(+) = scyllo-inosine + NADH + H(+). The protein operates within polyol metabolism; myo-inositol degradation into acetyl-CoA; acetyl-CoA from myo-inositol: step 1/7. Its function is as follows. Involved in the oxidation of myo-inositol (MI) and D-chiro-inositol (DCI) to 2-keto-myo-inositol (2KMI or 2-inosose) and 1-keto-D-chiro-inositol (1KDCI), respectively. This is Inositol 2-dehydrogenase/D-chiro-inositol 3-dehydrogenase from Bacillus velezensis (strain DSM 23117 / BGSC 10A6 / LMG 26770 / FZB42) (Bacillus amyloliquefaciens subsp. plantarum).